A 493-amino-acid chain; its full sequence is Dipeptide permease D (493 aa).

13 helical membrane-spanning segments follow: residues 14 to 34 (VVALQIWEYFSFYGMRALLIL), 49 to 69 (ELFSAYCSLVYVTPILGGYLA), 91 to 111 (LVLGASEIAPTFLYLSLAIIV), 138 to 158 (GGFSLLYAAGNIGSIVAPIAC), 167 to 187 (WAMGFALAAIGMLAGLVIFLC), 212 to 232 (NWGWLLILLVAAPLLITVLFW), 235 to 255 (WSVYALIVATAIGLVVLAKIY), 267 to 287 (LGLIVTLTLFSMLFWAFAQQG), 312 to 332 (MFQSVNAFAVMLCGVVLAWLV), 344 to 364 (IWGKFALGLGLMSAGFCILTL), 379 to 399 (LMVLGLAVMGFAELFIDPVAM), 413 to 433 (VLTGIYMLLSGAIANYLAGVI), and 458 to 478 (VFEQITWGALACVGVVLLIWL).

Belongs to the major facilitator superfamily. Proton-dependent oligopeptide transporter (POT/PTR) (TC 2.A.17) family. DtpD subfamily.

The protein resides in the cell inner membrane. Probable proton-dependent permease that transports dipeptides. This Salmonella typhimurium (strain 14028s / SGSC 2262) protein is Dipeptide permease D.